The following is a 288-amino-acid chain: Purine nucleoside phosphorylase (288 aa).

65–66 (RN) contacts phosphate. Met201 provides a ligand contact to substrate. Thr202 provides a ligand contact to phosphate.

This sequence belongs to the PNP/MTAP phosphorylase family. MTAP subfamily. In terms of assembly, homotrimer.

Its subcellular location is the cytoplasm. The protein localises to the nucleus. The catalysed reaction is a purine D-ribonucleoside + phosphate = a purine nucleobase + alpha-D-ribose 1-phosphate. It functions in the pathway purine metabolism; purine nucleoside salvage. Functionally, purine nucleoside phosphorylase involved in purine salvage. The protein is Purine nucleoside phosphorylase of Drosophila pseudoobscura pseudoobscura (Fruit fly).